The chain runs to 460 residues: tRNA modification GTPase MnmE (460 aa).

3 residues coordinate (6S)-5-formyl-5,6,7,8-tetrahydrofolate: arginine 22, glutamate 87, and arginine 126. The TrmE-type G domain maps to 222–381 (GLKTAIIGKP…LENTIYNLVF (160 aa)). Asparagine 232 lines the K(+) pocket. GTP-binding positions include 232–237 (NVGKSS), 251–257 (TDIPGTT), and 276–279 (DTAG). Mg(2+) is bound at residue serine 236. K(+) is bound by residues threonine 251, isoleucine 253, and threonine 256. Residue threonine 257 coordinates Mg(2+). Lysine 460 is a binding site for (6S)-5-formyl-5,6,7,8-tetrahydrofolate.

The protein belongs to the TRAFAC class TrmE-Era-EngA-EngB-Septin-like GTPase superfamily. TrmE GTPase family. In terms of assembly, homodimer. Heterotetramer of two MnmE and two MnmG subunits. It depends on K(+) as a cofactor.

The protein localises to the cytoplasm. Its function is as follows. Exhibits a very high intrinsic GTPase hydrolysis rate. Involved in the addition of a carboxymethylaminomethyl (cmnm) group at the wobble position (U34) of certain tRNAs, forming tRNA-cmnm(5)s(2)U34. The chain is tRNA modification GTPase MnmE from Thermoanaerobacter pseudethanolicus (strain ATCC 33223 / 39E) (Clostridium thermohydrosulfuricum).